Consider the following 583-residue polypeptide: Exonuclease 3'-5' domain-containing protein 2 (583 aa).

The Mitochondrial intermembrane segment spans residues Met1–Arg11. A helical transmembrane segment spans residues Asn12–His29. Residues Arg30–Thr583 are Cytoplasmic-facing. Residues Thr62–Leu228 form the 3'-5' exonuclease domain. Residues Asp83, Glu85, and Asp213 each coordinate a divalent metal cation. The span at Gly266 to Asn281 shows a compositional bias: polar residues. The segment at Gly266 to Lys286 is disordered.

Belongs to the EXD2 family. As to quaternary structure, homodimer. Mg(2+) serves as cofactor. Mn(2+) is required as a cofactor.

It is found in the mitochondrion membrane. In terms of biological role, 3'-5' exoribonuclease required for mitochondrial metabolism. The sequence is that of Exonuclease 3'-5' domain-containing protein 2 from Drosophila melanogaster (Fruit fly).